The sequence spans 410 residues: MEAYIRQKRATPGMVQASDMQLVRPMSAVNRNGREVHAYDGPMQFMMSPNNPDQILTSTGNASITTTPTSPYSDAPLEKLTPSSQDSEDEESTPVDILPSSNSFDSTRHSADHLLTHSAPISPALMNNNGGSHHDSSSGKSVEHSSPQASGHNDTEGDVVGPIEQWVTQPAPQGVLYKCRITRDRKGMDRGLFPIYYLHLERDYGKKVFCLAGRKRKKSKTSNYIISCDPTDLSRQADGFVGKLRSNVFGTTFFVYDSGKKEDHGNPRLDLAVVIYDTNILGFKGPRNMTVLLPGMTEDDQRVKISSADGQQGLLDSWKSKNMDNVVELHNKTPIWNDETQSYVLNFHGRVTQASVKNFQLVHDSDPDYIVMQFGRTSDDIFTMDFRYPLCAFQAFAIALSSFDGKLACE.

Residues 48-72 show a composition bias toward polar residues; it reads SPNNPDQILTSTGNASITTTPTSPY. 2 disordered regions span residues 48–109 and 121–159; these read SPNN…STRH and ISPALMNNNGGSHHDSSSGKSVEHSSPQASGHNDTEGDV. Residues 132 to 143 show a composition bias toward basic and acidic residues; the sequence is SHHDSSSGKSVE.

It belongs to the TUB family.

The protein localises to the cytoplasm. It is found in the nucleus. This is Protein king tubby 2 (king-tubby2) from Aedes aegypti (Yellowfever mosquito).